Consider the following 128-residue polypeptide: uncharacterized protein (128 aa).

Residues 95–123 (IIDFATAKRELDRLTEEIATLKGELAQDK) are a coiled coil.

It localises to the cellular thylakoid membrane. This is an uncharacterized protein from Synechocystis sp. (strain ATCC 27184 / PCC 6803 / Kazusa).